We begin with the raw amino-acid sequence, 141 residues long: Galactose-6-phosphate isomerase subunit LacA 1 (141 aa).

The protein belongs to the LacAB/RpiB family. As to quaternary structure, heteromultimeric protein consisting of LacA and LacB.

It catalyses the reaction aldehydo-D-galactose 6-phosphate = keto-D-tagatose 6-phosphate. It participates in carbohydrate metabolism; D-galactose 6-phosphate degradation; D-tagatose 6-phosphate from D-galactose 6-phosphate: step 1/1. This Streptococcus pyogenes serotype M6 (strain ATCC BAA-946 / MGAS10394) protein is Galactose-6-phosphate isomerase subunit LacA 1.